The sequence spans 246 residues: 1-(5-phosphoribosyl)-5-[(5-phosphoribosylamino)methylideneamino] imidazole-4-carboxamide isomerase (246 aa).

Asp8 (proton acceptor) is an active-site residue. Asp129 functions as the Proton donor in the catalytic mechanism.

Belongs to the HisA/HisF family.

Its subcellular location is the cytoplasm. The catalysed reaction is 1-(5-phospho-beta-D-ribosyl)-5-[(5-phospho-beta-D-ribosylamino)methylideneamino]imidazole-4-carboxamide = 5-[(5-phospho-1-deoxy-D-ribulos-1-ylimino)methylamino]-1-(5-phospho-beta-D-ribosyl)imidazole-4-carboxamide. It functions in the pathway amino-acid biosynthesis; L-histidine biosynthesis; L-histidine from 5-phospho-alpha-D-ribose 1-diphosphate: step 4/9. This is 1-(5-phosphoribosyl)-5-[(5-phosphoribosylamino)methylideneamino] imidazole-4-carboxamide isomerase from Nitrobacter hamburgensis (strain DSM 10229 / NCIMB 13809 / X14).